Consider the following 401-residue polypeptide: Putative F-box/FBD/LRR-repeat protein At3g23955 (401 aa).

The 47-residue stretch at 56–102 (VPARFQLPDPLLTQILNHLPTEEAVKTSVLSTRWRTLWLWVHNLELS) folds into the F-box domain. LRR repeat units follow at residues 128–152 (IESL…AFVK) and 275–296 (MSSL…FLRS). Residues 321–373 (IKRVSISSVPECLLSSLEFVEFKAPICGLAPEMMLVWYFLENSPTLKKLTLRL) form the FBD domain.

In Arabidopsis thaliana (Mouse-ear cress), this protein is Putative F-box/FBD/LRR-repeat protein At3g23955.